A 167-amino-acid polypeptide reads, in one-letter code: MKPLVGVIMGSISDWEYMKKAVEVLKEFGVPHEVKVVSAHRTPELMYEYAKTARERGIEVIIAGAGGSAHLPGMTASMTTLPVIGVPIPTKNLGGVDSLYSIVQMPAGIPVATVAIGNATNAGLLAVRILSIKYPEYAKKLDEYTEKLKEKVAKMNEELQKEVENGI.

Substrate-binding residues include Ser-11, Asp-14, and Arg-41.

This sequence belongs to the AIR carboxylase family. Class I subfamily.

The enzyme catalyses 5-carboxyamino-1-(5-phospho-D-ribosyl)imidazole + H(+) = 5-amino-1-(5-phospho-D-ribosyl)imidazole-4-carboxylate. Its pathway is purine metabolism; IMP biosynthesis via de novo pathway; 5-amino-1-(5-phospho-D-ribosyl)imidazole-4-carboxylate from 5-amino-1-(5-phospho-D-ribosyl)imidazole (N5-CAIR route): step 2/2. Its function is as follows. Catalyzes the conversion of N5-carboxyaminoimidazole ribonucleotide (N5-CAIR) to 4-carboxy-5-aminoimidazole ribonucleotide (CAIR). In Aquifex aeolicus (strain VF5), this protein is N5-carboxyaminoimidazole ribonucleotide mutase.